A 481-amino-acid polypeptide reads, in one-letter code: RAC-beta serine/threonine-protein kinase (481 aa).

Methionine 1 is modified (N-acetylmethionine). In terms of domain architecture, PH spans serine 5–asparagine 108. Serine 34 carries the post-translational modification Phosphoserine. A disulfide bridge links cysteine 60 with cysteine 77. Serine 126 bears the Phosphoserine mark. Residues serine 128 and serine 131 are each glycosylated (O-linked (GlcNAc) serine). One can recognise a Protein kinase domain in the interval phenylalanine 152 to phenylalanine 409. ATP contacts are provided by residues leucine 158–valine 166 and lysine 181. The active-site Proton acceptor is the aspartate 275. Positions 280 and 293 each coordinate Mn(2+). Cysteine 297 and cysteine 311 are joined by a disulfide. Threonine 306 carries an O-linked (GlcNAc) threonine glycan. Threonine 309 is subject to Phosphothreonine; by PDPK1. Threonine 313 is a glycosylation site (O-linked (GlcNAc) threonine). The AGC-kinase C-terminal domain occupies leucine 410–glutamate 481. Serine 447 is modified (phosphoserine). The residue at position 451 (threonine 451) is a Phosphothreonine. 2 positions are modified to phosphoserine: serine 474 and serine 478. Serine 474 carries an O-linked (GlcNAc) serine; alternate glycan.

The protein belongs to the protein kinase superfamily. AGC Ser/Thr protein kinase family. RAC subfamily. Interacts with BTBD10. Interacts with KCTD20. Interacts (via PH domain) with MTCP1, TCL1A and TCL1B; this interaction may facilitate AKT2 oligomerization and phosphorylation, hence increasing kinase activity. Interacts with PHB2; this interaction may be important for myogenic differentiation. Interacts (when phosphorylated) with CLIP3/ClipR-59; this interaction promotes AKT2 recruitment to the plasma membrane. Interacts with WDFY2/ProF (via WD repeats 1-3). In terms of processing, phosphorylation on Thr-309 and Ser-474 is required for full activity. Phosphorylation of the activation loop at Thr-309 by PDPK1/PDK1 is a prerequisite for full activation. Phosphorylated and activated by PDPK1/PDK1 in the presence of phosphatidylinositol 3,4,5-trisphosphate. Phosphorylation by mTORC2 in response to growth factors plays a key role in AKT1 activation: mTORC2 phosphorylates different sites depending on the context, such as Ser-474 or Ser-478, thereby facilitating subsequent phosphorylation of the activation loop by PDPK1/PDK1. Post-translationally, ubiquitinated; undergoes both 'Lys-48'- and 'Lys-63'-linked polyubiquitination. TRAF6 catalyzes 'Lys-63'-linked AKT2 ubiquitination; this modification may be important for AKT2 recruitment to the plasma membrane and for AKT2 activating phosphorylation. When phosphorylated, undergoes 'Lys-48'-polyubiquitination catalyzed by TTC3 in the nucleus, leading to its degradation by the proteasome. O-GlcNAcylation at Thr-306 and Thr-313 inhibits activating phosphorylation at Thr-309 via the disruption of the interaction between AKT and PDPK1/PDK1. Widely expressed. Expressed in myoblasts.

The protein localises to the cytoplasm. It localises to the nucleus. It is found in the cell membrane. Its subcellular location is the early endosome. It catalyses the reaction L-seryl-[protein] + ATP = O-phospho-L-seryl-[protein] + ADP + H(+). The catalysed reaction is L-threonyl-[protein] + ATP = O-phospho-L-threonyl-[protein] + ADP + H(+). With respect to regulation, phosphorylation at Thr-309 (in the kinase domain) and Ser-474 (in the C-terminal regulatory region) is required for full activation. In adipocytes and hepatocytes, the activation is induced by insulin. Aminofurazans, such as 4-[2-(4-amino-2,5-dihydro-1,2,5-oxadiazol-3-yl)-6-{[(1S)-3-amino-1-phenylpropyl]oxy}-1-ethyl-1H-imidazo[4,5-c]pyridin-4-yl]-2-methylbut-3-yn-2-ol (compound 32), are potent AKT2 inhibitors. AKT2 phosphorylation of PKP1 is induced by insulin. Its function is as follows. Serine/threonine kinase closely related to AKT1 and AKT3. All 3 enzymes, AKT1, AKT2 and AKT3, are collectively known as AKT kinase. AKT regulates many processes including metabolism, proliferation, cell survival, growth and angiogenesis, through the phosphorylation of a range of downstream substrates. Over 100 substrates have been reported so far, although for most of them, the precise AKT kinase catalyzing the reaction was not specified. AKT regulates glucose uptake by mediating insulin-induced translocation of the SLC2A4/GLUT4 glucose transporter to the cell surface. Phosphorylation of PTPN1 at 'Ser-50' negatively modulates its phosphatase activity preventing dephosphorylation of the insulin receptor and the attenuation of insulin signaling. Phosphorylation of TBC1D4 triggers the binding of this effector to inhibitory 14-3-3 proteins, which is required for insulin-stimulated glucose transport. AKT also regulates the storage of glucose in the form of glycogen by phosphorylating GSK3A at 'Ser-21' and GSK3B at 'Ser-9', resulting in inhibition of its kinase activity. Phosphorylation of GSK3 isoforms by AKT is also thought to be one mechanism by which cell proliferation is driven. AKT also regulates cell survival via the phosphorylation of MAP3K5 (apoptosis signal-related kinase). Phosphorylation of 'Ser-83' decreases MAP3K5 kinase activity stimulated by oxidative stress and thereby prevents apoptosis. AKT mediates insulin-stimulated protein synthesis by phosphorylating TSC2 at 'Ser-939' and 'Thr-1462', thereby activating mTORC1 signaling and leading to both phosphorylation of 4E-BP1 and in activation of RPS6KB1. AKT is involved in the phosphorylation of members of the FOXO factors (Forkhead family of transcription factors), leading to binding of 14-3-3 proteins and cytoplasmic localization. In particular, FOXO1 is phosphorylated at 'Thr-24', 'Ser-256' and 'Ser-319'. FOXO3 and FOXO4 are phosphorylated on equivalent sites. AKT has an important role in the regulation of NF-kappa-B-dependent gene transcription and positively regulates the activity of CREB1 (cyclic AMP (cAMP)-response element binding protein). The phosphorylation of CREB1 induces the binding of accessory proteins that are necessary for the transcription of pro-survival genes such as BCL2 and MCL1. AKT phosphorylates 'Ser-454' on ATP citrate lyase (ACLY), thereby potentially regulating ACLY activity and fatty acid synthesis. Activates the 3B isoform of cyclic nucleotide phosphodiesterase (PDE3B) via phosphorylation of 'Ser-273', resulting in reduced cyclic AMP levels and inhibition of lipolysis. Phosphorylates PIKFYVE on 'Ser-318', which results in increased PI(3)P-5 activity. The Rho GTPase-activating protein DLC1 is another substrate and its phosphorylation is implicated in the regulation cell proliferation and cell growth. AKT plays a role as key modulator of the AKT-mTOR signaling pathway controlling the tempo of the process of newborn neurons integration during adult neurogenesis, including correct neuron positioning, dendritic development and synapse formation. Signals downstream of phosphatidylinositol 3-kinase (PI(3)K) to mediate the effects of various growth factors such as platelet-derived growth factor (PDGF), epidermal growth factor (EGF), insulin and insulin-like growth factor 1 (IGF1). AKT mediates the antiapoptotic effects of IGF1. Essential for the SPATA13-mediated regulation of cell migration and adhesion assembly and disassembly. May be involved in the regulation of the placental development. In response to lysophosphatidic acid stimulation, inhibits the ciliogenesis cascade. In this context, phosphorylates WDR44, hence stabilizing its interaction with Rab11 and preventing the formation of the ciliogenic Rab11-FIP3-RAB3IP complex. Also phosphorylates RAB3IP/Rabin8, thus may affect RAB3IP guanine nucleotide exchange factor (GEF) activity toward Rab8, which is important for cilia growth. Phosphorylates PKP1, facilitating its interaction with YWHAG and translocation to the nucleus, ultimately resulting in a reduction in keratinocyte intercellular adhesion. Phosphorylation of PKP1 increases PKP1 protein stability, translocation to the cytoplasm away from desmosome plaques and PKP1-driven cap-dependent translation. Several AKT2-specific substrates have been identified, including ANKRD2, C2CD5, CLK2 and PITX2. May play a role in myoblast differentiation. In this context, may act through PITX2 phosphorylation. Unphosphorylated PITX2 associates with an ELAVL1/HuR-containing complex, which stabilizes CCND1 cyclin mRNA, ensuring cell proliferation. Phosphorylation by AKT2 impairs this association, leading to CCND1 mRNA destabilization and progression towards differentiation. Also involved in the negative regulation of myogenesis in response to stress conditions. In this context, acts by phosphorylating ANKRD2. May also be a key regulator of glucose uptake. Regulates insulin-stimulated glucose transport by the increase of glucose transporter GLUT4 translocation from intracellular stores to the plasma membrane. In this context, acts by phosphorylating C2CD5/CDP138 on 'Ser-197' in insulin-stimulated adipocytes. Through the phosphorylation of CLK2 on 'Thr-343', involved in insulin-regulated suppression of hepatic gluconeogenesis. The sequence is that of RAC-beta serine/threonine-protein kinase from Homo sapiens (Human).